A 389-amino-acid polypeptide reads, in one-letter code: Probable dual-specificity RNA methyltransferase RlmN (389 aa).

The tract at residues 1–23 is disordered; sequence MTTQHPDTPETGITPGGTSGAFR. The active-site Proton acceptor is the glutamate 127. The Radical SAM core domain maps to 133–376; that stretch reads YPTRTTLCIS…ATLRDTRGQD (244 aa). A disulfide bridge connects residues cysteine 140 and cysteine 381. [4Fe-4S] cluster contacts are provided by cysteine 147, cysteine 151, and cysteine 154. S-adenosyl-L-methionine is bound by residues 202-203, serine 236, 259-261, and asparagine 338; these read GE and SLH. Cysteine 381 functions as the S-methylcysteine intermediate in the catalytic mechanism.

The protein belongs to the radical SAM superfamily. RlmN family. [4Fe-4S] cluster serves as cofactor.

Its subcellular location is the cytoplasm. The catalysed reaction is adenosine(2503) in 23S rRNA + 2 reduced [2Fe-2S]-[ferredoxin] + 2 S-adenosyl-L-methionine = 2-methyladenosine(2503) in 23S rRNA + 5'-deoxyadenosine + L-methionine + 2 oxidized [2Fe-2S]-[ferredoxin] + S-adenosyl-L-homocysteine. The enzyme catalyses adenosine(37) in tRNA + 2 reduced [2Fe-2S]-[ferredoxin] + 2 S-adenosyl-L-methionine = 2-methyladenosine(37) in tRNA + 5'-deoxyadenosine + L-methionine + 2 oxidized [2Fe-2S]-[ferredoxin] + S-adenosyl-L-homocysteine. In terms of biological role, specifically methylates position 2 of adenine 2503 in 23S rRNA and position 2 of adenine 37 in tRNAs. This is Probable dual-specificity RNA methyltransferase RlmN from Bifidobacterium longum (strain NCC 2705).